A 502-amino-acid chain; its full sequence is Cytochrome P450 monooxygenase orf6 (502 aa).

The chain crosses the membrane as a helical span at residues 3–25 (ALWVLAVALVAYFLCLSIYRLFL). N-linked (GlcNAc...) asparagine glycosylation is present at asparagine 382. Cysteine 445 provides a ligand contact to heme.

The protein belongs to the cytochrome P450 family. Heme serves as cofactor.

The protein resides in the membrane. It participates in mycotoxin biosynthesis. Its function is as follows. Cytochrome P450 monooxygenase; part of the gene cluster that mediates the biosynthesis of brefeldin A (BFA), a protein transport inhibitor that shows antiviral, antifungal, and antitumor properties. The proposed biosynthesis of BFA involves formation of an acyclic polyketide chain that is differentially tailored throughout the backbone. The highly reducing polyketide synthase Bref-PKS is proposed to synthesize the precisely reduced octaketide precursor, which could then be directly offloaded by the thiohydrolase enzyme Bref-TH followed by a cytochrome P450 monooxygenase-mediated formation of the cyclopentane ring and macrocyclization to afford 7-deoxy BFA. Alternatively, the first ring annulation can also occur on the ACP-tethered intermediate before the thiohydrolase release and lactonization. The C7-hydroxylation by another cytochrome P450 monooxygenase is believed to be the final step in the process to obtain the final structure of BFA. In addition to the HRPKS Bref-PKS and the thiohydrolase Bref-TH, the brefeldin A biosynthesis cluster contains 4 cytochrome p450 monooxygenases (called orf3 to orf6), as well a the probable cluster-specific transcription regulator orf8. The protein is Cytochrome P450 monooxygenase orf6 of Eupenicillium brefeldianum (Penicillium brefeldianum).